The following is a 256-amino-acid chain: Alcohol dehydrogenase (256 aa).

Residue Phe-12–Leu-35 coordinates NAD(+). Ser-140 serves as a coordination point for substrate. Catalysis depends on Tyr-153, which acts as the Proton acceptor.

It belongs to the short-chain dehydrogenases/reductases (SDR) family. As to quaternary structure, homodimer.

It carries out the reaction a primary alcohol + NAD(+) = an aldehyde + NADH + H(+). The enzyme catalyses a secondary alcohol + NAD(+) = a ketone + NADH + H(+). This Drosophila yakuba (Fruit fly) protein is Alcohol dehydrogenase (Adh).